Reading from the N-terminus, the 154-residue chain is MGRNKGIEQKVWPLAERVGGELNLEVVDVEFVKEAGRYFLRIYIDKDEGVDLDDCQNFSERIGVILDEEDPIPQSYYLEVSSPGIERPLKKLADFEKFAGREAQIKTFAAIEGQKQFKGKLLGVRDGQVVIDAGKGEVQIPLEQIAKANLTFDF.

The protein belongs to the RimP family.

The protein resides in the cytoplasm. Functionally, required for maturation of 30S ribosomal subunits. This chain is Ribosome maturation factor RimP, found in Carboxydothermus hydrogenoformans (strain ATCC BAA-161 / DSM 6008 / Z-2901).